A 29-amino-acid chain; its full sequence is Galanin (29 aa).

The residue at position 29 (Ala-29) is an Alanine amide.

It belongs to the galanin family.

The protein localises to the secreted. Contracts smooth muscle of the gastrointestinal and genitourinary tract, regulates growth hormone release, modulates insulin release, and may be involved in the control of adrenal secretion. This chain is Galanin (gal), found in Oncorhynchus mykiss (Rainbow trout).